The primary structure comprises 406 residues: Probable sodium/metabolite cotransporter BASS1, chloroplastic (406 aa).

The transit peptide at 1–64 directs the protein to the chloroplast; the sequence is MPLLRRPPAA…RHLCGIPSSR (64 aa). 9 consecutive transmembrane segments (helical) span residues 98-118, 123-143, 152-172, 187-209, 217-237, 252-272, 278-298, 315-335, and 376-396; these read VGEV…AVAL, AFLW…MLGM, LKTA…QYSV, PSYY…SNIV, VALS…LTPL, MGLF…GALL, GLVQ…VAVL, LQVV…GYVL, and VPCA…AGIW.

This sequence belongs to the bile acid:sodium symporter (BASS) (TC 2.A.28) family.

It is found in the membrane. The protein resides in the plastid. Its subcellular location is the chloroplast envelope. May function as sodium-coupled metabolite transporter across the chloroplast envelope. The polypeptide is Probable sodium/metabolite cotransporter BASS1, chloroplastic (BASS1) (Oryza sativa subsp. japonica (Rice)).